A 579-amino-acid polypeptide reads, in one-letter code: F-box protein At5g39450 (579 aa).

The F-box domain occupies 16–62 (TCLLLSLPEDVIAVIARFVSPRDICNLSLCCKSLCDVVDSERIWLVQ).

The protein is F-box protein At5g39450 of Arabidopsis thaliana (Mouse-ear cress).